We begin with the raw amino-acid sequence, 369 residues long: uncharacterized protein (369 aa).

Helical transmembrane passes span 25–45 (QWVI…TVHW), 47–67 (FGLL…LMPE), 119–139 (LNIV…FGVM), 152–172 (ITGF…FSAL), 206–226 (GALH…LFAI), 235–255 (LQAV…TLHL), 268–288 (LLFT…LPLI), 295–315 (LVGF…TTVF), and 323–343 (WVFY…GTVF).

The protein to B.subtilis ComEC.

The protein localises to the cell membrane. This is an uncharacterized protein from Mycoplasma pneumoniae (strain ATCC 29342 / M129 / Subtype 1) (Mycoplasmoides pneumoniae).